Consider the following 94-residue polypeptide: Exodeoxyribonuclease 7 small subunit (94 aa).

Residues M1–S21 form a disordered region.

Belongs to the XseB family. As to quaternary structure, heterooligomer composed of large and small subunits.

The protein localises to the cytoplasm. It catalyses the reaction Exonucleolytic cleavage in either 5'- to 3'- or 3'- to 5'-direction to yield nucleoside 5'-phosphates.. Functionally, bidirectionally degrades single-stranded DNA into large acid-insoluble oligonucleotides, which are then degraded further into small acid-soluble oligonucleotides. The chain is Exodeoxyribonuclease 7 small subunit from Ralstonia pickettii (strain 12J).